The following is a 449-amino-acid chain: UDP-N-acetylmuramoylalanine--D-glutamate ligase (449 aa).

An ATP-binding site is contributed by 118–124 (GTNGKTT).

The protein belongs to the MurCDEF family.

The protein localises to the cytoplasm. The enzyme catalyses UDP-N-acetyl-alpha-D-muramoyl-L-alanine + D-glutamate + ATP = UDP-N-acetyl-alpha-D-muramoyl-L-alanyl-D-glutamate + ADP + phosphate + H(+). It functions in the pathway cell wall biogenesis; peptidoglycan biosynthesis. Cell wall formation. Catalyzes the addition of glutamate to the nucleotide precursor UDP-N-acetylmuramoyl-L-alanine (UMA). The sequence is that of UDP-N-acetylmuramoylalanine--D-glutamate ligase from Staphylococcus aureus (strain MRSA252).